A 383-amino-acid polypeptide reads, in one-letter code: 2-methylcitrate synthase 2 (383 aa).

Substrate contacts are provided by arginine 73 and histidine 195. Residue histidine 230 is part of the active site. 263–267 (VVMGF) is a binding site for CoA. Histidine 269 is an active-site residue. Arginine 278 is a substrate binding site. Aspartate 320 is a catalytic residue. Substrate-binding residues include arginine 345 and arginine 364.

It belongs to the citrate synthase family. In terms of assembly, homodimer.

The catalysed reaction is propanoyl-CoA + oxaloacetate + H2O = (2S,3S)-2-methylcitrate + CoA + H(+). It carries out the reaction oxaloacetate + acetyl-CoA + H2O = citrate + CoA + H(+). Its pathway is organic acid metabolism; propanoate degradation. It participates in carbohydrate metabolism; tricarboxylic acid cycle; isocitrate from oxaloacetate: step 1/2. Functionally, involved in the catabolism of short chain fatty acids (SCFA) via the tricarboxylic acid (TCA)(acetyl degradation route) and via the 2-methylcitrate cycle I (propionate degradation route). Catalyzes the Claisen condensation of propionyl-CoA and oxaloacetate (OAA) to yield 2-methylcitrate (2-MC) and CoA. Also catalyzes the condensation of oxaloacetate with acetyl-CoA but with a lower specificity. This Corynebacterium glutamicum (strain ATCC 13032 / DSM 20300 / JCM 1318 / BCRC 11384 / CCUG 27702 / LMG 3730 / NBRC 12168 / NCIMB 10025 / NRRL B-2784 / 534) protein is 2-methylcitrate synthase 2 (prpC2).